A 184-amino-acid polypeptide reads, in one-letter code: MDLSGSLLIAMPSMADPRFERSLVLICAHSPDGAMGLVVNKPVEDLSFAGMLEQLNIPRAPNGRDIRVHLGGPMERGRGFVLHSPDYMSVGATMLVSGKFGMTATVDILEALARGQGPSSALMALGYSGWGPGQLEAEVQRNDWLTAEAPSELVFSDDDPGKWTGMLRHMGIDPLTLSSTAGHA.

It belongs to the UPF0301 (AlgH) family.

This Cereibacter sphaeroides (strain ATCC 17023 / DSM 158 / JCM 6121 / CCUG 31486 / LMG 2827 / NBRC 12203 / NCIMB 8253 / ATH 2.4.1.) (Rhodobacter sphaeroides) protein is UPF0301 protein RHOS4_26140.